A 248-amino-acid polypeptide reads, in one-letter code: Probable transcriptional regulatory protein M446_6579 (248 aa).

The protein belongs to the TACO1 family.

It is found in the cytoplasm. The protein is Probable transcriptional regulatory protein M446_6579 of Methylobacterium sp. (strain 4-46).